The sequence spans 164 residues: Protein eva-1 homolog B (164 aa).

Residues 29 to 49 (GLYFVLGVCFGLLLTLCLLVI) traverse the membrane as a helical segment. Positions 56–110 (RSRPRTPAPRRDPRSSTLEPEDEDDEEDEDTMTRLGPDDTLQGQELSTEPDGPLS) are disordered. The span at 74-85 (EPEDEDDEEDED) shows a compositional bias: acidic residues. Phosphothreonine is present on residues T86, T149, and T157.

It belongs to the EVA1 family.

The protein localises to the membrane. This Mus musculus (Mouse) protein is Protein eva-1 homolog B (Eva1b).